Consider the following 309-residue polypeptide: Ribose-phosphate pyrophosphokinase (309 aa).

ATP contacts are provided by residues 37-39 (DGE) and 96-97 (RQ). Positions 130 and 169 each coordinate Mg(2+). Residue lysine 192 is part of the active site. Residues arginine 194, aspartate 218, and 222 to 226 (DTAGT) contribute to the D-ribose 5-phosphate site.

Belongs to the ribose-phosphate pyrophosphokinase family. Class I subfamily. Homohexamer. Requires Mg(2+) as cofactor.

The protein localises to the cytoplasm. It carries out the reaction D-ribose 5-phosphate + ATP = 5-phospho-alpha-D-ribose 1-diphosphate + AMP + H(+). Its pathway is metabolic intermediate biosynthesis; 5-phospho-alpha-D-ribose 1-diphosphate biosynthesis; 5-phospho-alpha-D-ribose 1-diphosphate from D-ribose 5-phosphate (route I): step 1/1. Functionally, involved in the biosynthesis of the central metabolite phospho-alpha-D-ribosyl-1-pyrophosphate (PRPP) via the transfer of pyrophosphoryl group from ATP to 1-hydroxyl of ribose-5-phosphate (Rib-5-P). This Wolinella succinogenes (strain ATCC 29543 / DSM 1740 / CCUG 13145 / JCM 31913 / LMG 7466 / NCTC 11488 / FDC 602W) (Vibrio succinogenes) protein is Ribose-phosphate pyrophosphokinase.